Here is a 531-residue protein sequence, read N- to C-terminus: Peptide chain release factor 3 (531 aa).

In terms of domain architecture, tr-type G spans Ser-13–Met-282. GTP-binding positions include Ser-22–Thr-29, Asp-90–His-94, and Asn-144–Asp-147.

Belongs to the TRAFAC class translation factor GTPase superfamily. Classic translation factor GTPase family. PrfC subfamily.

It is found in the cytoplasm. Functionally, increases the formation of ribosomal termination complexes and stimulates activities of RF-1 and RF-2. It binds guanine nucleotides and has strong preference for UGA stop codons. It may interact directly with the ribosome. The stimulation of RF-1 and RF-2 is significantly reduced by GTP and GDP, but not by GMP. This is Peptide chain release factor 3 from Vibrio cholerae serotype O1 (strain ATCC 39315 / El Tor Inaba N16961).